The chain runs to 1552 residues: MSAEAACSDDSFGPWAGATCRGGFDFTLLFEETILSILPSVLVIVVAPIPIIRLAREPPKVRASALDWFKKISSICFITLSAALVGLWARNSTITQTRASTPSAVLTFVLSLVYVLLSTIEHRLSLRPSSVLSFYLGLSVLFDIARTRTLFMLEDATHSAIPPVFASSLALRVVMLLLESTEKRSLLLAKYDNAAPESVGGPYNLGVFYWLSTLFFTGYRKILEIGDLYPLDDELRSTGLAKKMSDAWRKVPDKAAPNVLFATWLKTFSKAMFMPVVPRLFQIGFTYAQPFLITAAIELAATPQTQPYNNNGYGLIGAYILVYSGIAVSVGQYEWRNYRAATMMRGSIIPLVYEKSLILDSCSSATFHPTAALTLVSTDIETITSGLVQIHETWSNLVEIGLAIYLLERQLGAACVMSVGFAIVVMVGTVFLARPTGTHLAAWIQASQVRVIETSKALASIKWLKISGLTDVAFSVIQKLRKQELVVSEKFRYLLGLSLILSICTPILGPLLTFAVFAGIAAHGGSTLTIAKVFTAFSIIVLLNSPLAKIVQALPQISGSIASFQRIQDHLNAEERHDPRSTTTGTSPESNNGSQQTLSDKQATADGDTMISISGKFSWRSETPAPGTGITLVTGSDEGHLADTTPDANGDSRDAPVIDISPRLDIPRGALTLILGPVGCGKSTLLKALLGELSSFDGVIEAKYSGAVTYCDQNPWLPNETVRDIIRGRSATDTSDADSSEKADHDEDWYRVVVSACELQRDMQIWPRGDRTPVGSKGISMSGGQKQRLSIARAVYARRALVILDDVFSGLDANTEDVVFENLLGNSGILRKANMTVVLASSDVRRVPFADKIVLLNQHGQVQHTGTPGDLKQVAELGWADRDLDAQQEKPGKDELNHEHGEYSESAPEKLRRSQTNHGADNNAAVQEVLQAVESQADTARQMGDSAVYKFYVKSAGWLTITIFVIAICVYAFCDSFPSVWLKWWAEANEKNPNSDLGKWLGVYAVLGVGAVAACLIGTWQLFIITINRSGLYFHNLLVETVSRAPMMFHSTTDTGITVNRFSQDLQLIDMELPSAALGVVMALSFGIAQFILVCVSSRYMAALLPFLLAVLYAIQHFYLRTARQLRLLDIEYKAPLYTQLMETISGVVTIRAFRWETQSTEKAIRILDTSQKPSYLLFCVQRWITFAVNMVIMMLAVILIVLTTTLREAIGPGYVGIALSNILAFSATMQATITSWVTLEIALGAVARIRSFSMQVRSEDDEARDGLAKAGLDARLVQPTPETVGERWPSQGRIELDNVTASYPSSGRVLHNITMIIEPGQKVAICGRTGSGKSSLFLSLLGLIAQDSGSITIDSVDLATLPREYLRSQIVAVPQEAYILDGTVRLNADPYHNKETLGSTDPPDSRDEQIIDVLKRVGLWEKIATRGGLDMVIDDKFLSQGQAQLMVLARAMLRRDESRVLLLDEATSSLDEATTTLIDEIVSTWFKDWTVLAIAHKLDAILDYDRVAVLDAGRLVEYDQPRELLQRPTSIFKELYLLSTNQASLSSPDSN.

The next 2 helical transmembrane spans lie at 32-52 (ETIL…IPII) and 68-88 (WFKK…VGLW). A glycan (N-linked (GlcNAc...) asparagine) is linked at Asn91. Helical transmembrane passes span 100-120 (STPS…LSTI), 158-178 (HSAI…MLLL), 280-300 (LFQI…IELA), 311-331 (NGYG…VSVG), 413-433 (AACV…VFLA), 457-477 (ALAS…FSVI), 500-520 (ILSI…FAGI), and 528-548 (LTIA…SPLA). In terms of domain architecture, ABC transmembrane type-1 1 spans 280 to 559 (LFQIGFTYAQ…IVQALPQISG (280 aa)). A disordered region spans residues 573 to 655 (AEERHDPRST…PDANGDSRDA (83 aa)). Polar residues predominate over residues 581 to 602 (STTTGTSPESNNGSQQTLSDKQ). Asn592 is a glycosylation site (N-linked (GlcNAc...) asparagine). The region spanning 639-884 (GHLADTTPDA…AELGWADRDL (246 aa)) is the ABC transporter 1 domain. 676–683 (GPVGCGKS) contributes to the ATP binding site. N-linked (GlcNAc...) asparagine glycosylation is found at Asn719 and Asn834. The segment covering 887-912 (QQEKPGKDELNHEHGEYSESAPEKLR) has biased composition (basic and acidic residues). Residues 887-917 (QQEKPGKDELNHEHGEYSESAPEKLRRSQTN) are disordered. Transmembrane regions (helical) follow at residues 957–977 (GWLT…CDSF) and 1005–1025 (AVLG…LFII). In terms of domain architecture, ABC transmembrane type-1 2 spans 963–1241 (IFVIAICVYA…ATITSWVTLE (279 aa)). Asn1028 carries an N-linked (GlcNAc...) asparagine glycan. 4 helical membrane passes run 1076–1096 (AALG…LVCV), 1100–1120 (YMAA…HFYL), 1184–1204 (WITF…IVLT), and 1210–1230 (AIGP…SATM). One can recognise an ABC transporter 2 domain in the interval 1295 to 1538 (IELDNVTASY…PTSIFKELYL (244 aa)). N-linked (GlcNAc...) asparagine glycans are attached at residues Asn1299 and Asn1313. 1328-1335 (GRTGSGKS) contacts ATP.

It belongs to the ABC transporter superfamily. ABCC family. Conjugate transporter (TC 3.A.1.208) subfamily.

The protein resides in the cell membrane. Its function is as follows. ABC multidrug transporter; part of the gene cluster that mediates the biosynthesis of the lipopeptide antibiotics leucinostatins that show extensive biological activities, including antimalarial, antiviral, antibacterial, antifungal, and antitumor activities, as well as phytotoxic. May be involved in the efflux of leucinostatins. The polypeptide is ABC multidrug transporter lscH (Purpureocillium lilacinum (Paecilomyces lilacinus)).